A 379-amino-acid polypeptide reads, in one-letter code: Mannitol-1-phosphate 5-dehydrogenase (379 aa).

3–14 (ALHFGAGNIGRG) is an NAD(+) binding site.

This sequence belongs to the mannitol dehydrogenase family.

The enzyme catalyses D-mannitol 1-phosphate + NAD(+) = beta-D-fructose 6-phosphate + NADH + H(+). In Actinobacillus pleuropneumoniae serotype 5b (strain L20), this protein is Mannitol-1-phosphate 5-dehydrogenase.